We begin with the raw amino-acid sequence, 356 residues long: Phosphoribosylformylglycinamidine cyclo-ligase (356 aa).

Belongs to the AIR synthase family.

It localises to the cytoplasm. It carries out the reaction 2-formamido-N(1)-(5-O-phospho-beta-D-ribosyl)acetamidine + ATP = 5-amino-1-(5-phospho-beta-D-ribosyl)imidazole + ADP + phosphate + H(+). It participates in purine metabolism; IMP biosynthesis via de novo pathway; 5-amino-1-(5-phospho-D-ribosyl)imidazole from N(2)-formyl-N(1)-(5-phospho-D-ribosyl)glycinamide: step 2/2. The protein is Phosphoribosylformylglycinamidine cyclo-ligase of Acinetobacter baylyi (strain ATCC 33305 / BD413 / ADP1).